The chain runs to 153 residues: Endoribonuclease YbeY (153 aa).

3 residues coordinate Zn(2+): histidine 114, histidine 118, and histidine 124.

The protein belongs to the endoribonuclease YbeY family. It depends on Zn(2+) as a cofactor.

Its subcellular location is the cytoplasm. Its function is as follows. Single strand-specific metallo-endoribonuclease involved in late-stage 70S ribosome quality control and in maturation of the 3' terminus of the 16S rRNA. The polypeptide is Endoribonuclease YbeY (Shewanella sp. (strain MR-7)).